A 136-amino-acid chain; its full sequence is Beta-hordothionin (136 aa).

The N-terminal stretch at 1-27 (MGSKGLKGVMVCLLILGLVLEHVQVEG) is a signal peptide. Disulfide bonds link cysteine 30–cysteine 66, cysteine 31–cysteine 58, cysteine 39–cysteine 56, and cysteine 43–cysteine 52. Residues 73–136 (LALVSNSDEP…GDVGLTSLTA (64 aa)) constitute a propeptide, acidic domain.

The protein belongs to the plant thionin (TC 1.C.44) family. 4 C-C subfamily. As to quaternary structure, homodimer.

The protein localises to the secreted. Thionins are small plant proteins which are toxic to animal cells. They seem to exert their toxic effect at the level of the cell membrane. Their precise function is not known. In Hordeum vulgare (Barley), this protein is Beta-hordothionin (THI1.2).